A 156-amino-acid chain; its full sequence is Small ribosomal subunit protein uS7 (156 aa).

The protein belongs to the universal ribosomal protein uS7 family. As to quaternary structure, part of the 30S ribosomal subunit. Contacts proteins S9 and S11.

Functionally, one of the primary rRNA binding proteins, it binds directly to 16S rRNA where it nucleates assembly of the head domain of the 30S subunit. Is located at the subunit interface close to the decoding center, probably blocks exit of the E-site tRNA. This chain is Small ribosomal subunit protein uS7, found in Synechococcus elongatus (strain ATCC 33912 / PCC 7942 / FACHB-805) (Anacystis nidulans R2).